The primary structure comprises 552 residues: Nucleoside-diphosphatase mig-23 (552 aa).

The Cytoplasmic segment spans residues 1–6; the sequence is MRVSLR. A helical membrane pass occupies residues 7–27; that stretch reads FTILAVSAMIFFPVIVFIYVV. Residues 28 to 489 are Lumenal-facing; the sequence is EAHTSPKVIA…IVKETHSSSE (462 aa). Residue Glu174 is the Proton acceptor of the active site. Asn190 and Asn284 each carry an N-linked (GlcNAc...) asparagine glycan. A helical membrane pass occupies residues 490–510; the sequence is SLWAPLFFLSAVFCLFVLVCA. Residues 511 to 552 lie on the Cytoplasmic side of the membrane; the sequence is KEQSVLCFDDKRRSSFGMSRSQYSYKMLKENRTSSSFLENFA.

It belongs to the GDA1/CD39 NTPase family. As to expression, expressed in body wall muscles.

The protein localises to the golgi apparatus membrane. The enzyme catalyses a ribonucleoside 5'-diphosphate + H2O = a ribonucleoside 5'-phosphate + phosphate + H(+). Seems to be able to hydrolyze ADP, UDP and GDP. Supports mig-17 glycosylation and surface expression, which is required for proper migration of distal tip cells during gonad morphogenesis. This is Nucleoside-diphosphatase mig-23 (mig-23) from Caenorhabditis elegans.